We begin with the raw amino-acid sequence, 323 residues long: Beta-ketoacyl-[acyl-carrier-protein] synthase III (323 aa).

Residues Cys112 and His250 contribute to the active site. The segment at Gln251–Arg255 is ACP-binding. Asn280 is a catalytic residue.

This sequence belongs to the thiolase-like superfamily. FabH family. As to quaternary structure, homodimer.

It localises to the cytoplasm. It carries out the reaction malonyl-[ACP] + acetyl-CoA + H(+) = 3-oxobutanoyl-[ACP] + CO2 + CoA. It functions in the pathway lipid metabolism; fatty acid biosynthesis. Its function is as follows. Catalyzes the condensation reaction of fatty acid synthesis by the addition to an acyl acceptor of two carbons from malonyl-ACP. Catalyzes the first condensation reaction which initiates fatty acid synthesis and may therefore play a role in governing the total rate of fatty acid production. Possesses both acetoacetyl-ACP synthase and acetyl transacylase activities. Its substrate specificity determines the biosynthesis of branched-chain and/or straight-chain of fatty acids. The sequence is that of Beta-ketoacyl-[acyl-carrier-protein] synthase III from Clostridium beijerinckii (strain ATCC 51743 / NCIMB 8052) (Clostridium acetobutylicum).